The chain runs to 338 residues: DNA-directed RNA polymerase subunit alpha (338 aa).

Over residues methionine 1–glutamate 10 the composition is skewed to polar residues. Residues methionine 1–lysine 24 form a disordered region. The alpha N-terminal domain (alpha-NTD) stretch occupies residues methionine 1–glutamate 234. An alpha C-terminal domain (alpha-CTD) region spans residues phenylalanine 250–tyrosine 338.

Belongs to the RNA polymerase alpha chain family. As to quaternary structure, homodimer. The RNAP catalytic core consists of 2 alpha, 1 beta, 1 beta' and 1 omega subunit. When a sigma factor is associated with the core the holoenzyme is formed, which can initiate transcription.

It carries out the reaction RNA(n) + a ribonucleoside 5'-triphosphate = RNA(n+1) + diphosphate. In terms of biological role, DNA-dependent RNA polymerase catalyzes the transcription of DNA into RNA using the four ribonucleoside triphosphates as substrates. In Rhodospirillum centenum (strain ATCC 51521 / SW), this protein is DNA-directed RNA polymerase subunit alpha.